The primary structure comprises 82 residues: RNA-binding protein YbxF (82 aa).

Belongs to the eukaryotic ribosomal protein eL8 family.

The chain is RNA-binding protein YbxF from Geobacillus stearothermophilus (Bacillus stearothermophilus).